Here is a 154-residue protein sequence, read N- to C-terminus: 6,7-dimethyl-8-ribityllumazine synthase (154 aa).

5-amino-6-(D-ribitylamino)uracil-binding positions include Phe26, 60–62, and 84–86; these read ALE and CII. (2S)-2-hydroxy-3-oxobutyl phosphate is bound at residue 89 to 90; it reads ET. Residue His92 is the Proton donor of the active site. Asn117 is a 5-amino-6-(D-ribitylamino)uracil binding site. Arg131 serves as a coordination point for (2S)-2-hydroxy-3-oxobutyl phosphate.

Belongs to the DMRL synthase family.

It catalyses the reaction (2S)-2-hydroxy-3-oxobutyl phosphate + 5-amino-6-(D-ribitylamino)uracil = 6,7-dimethyl-8-(1-D-ribityl)lumazine + phosphate + 2 H2O + H(+). It functions in the pathway cofactor biosynthesis; riboflavin biosynthesis; riboflavin from 2-hydroxy-3-oxobutyl phosphate and 5-amino-6-(D-ribitylamino)uracil: step 1/2. In terms of biological role, catalyzes the formation of 6,7-dimethyl-8-ribityllumazine by condensation of 5-amino-6-(D-ribitylamino)uracil with 3,4-dihydroxy-2-butanone 4-phosphate. This is the penultimate step in the biosynthesis of riboflavin. This Polaromonas sp. (strain JS666 / ATCC BAA-500) protein is 6,7-dimethyl-8-ribityllumazine synthase.